The sequence spans 559 residues: Heterochromatin protein 1-binding protein 3 (559 aa).

Residues 1–132 (MATDLSEAEP…SKEKEKKVKK (132 aa)) are disordered. Basic and acidic residues-rich tracts occupy residues 51 to 68 (TPPK…KADA) and 96 to 128 (EQPK…EKEK). 3 H15 domains span residues 158–233 (SRPK…VVVS), 256–331 (QQVK…QLKK), and 339–414 (GGTL…QLCF). The PxVxL motif signature appears at 256 to 260 (QQVKL). A disordered region spans residues 421–559 (DVLYPEKQQD…AMRKSLRAKK (139 aa)). A compositionally biased stretch (acidic residues) spans 429–459 (QDEDSEESQEEEEEESEEEEESEEEESEEEE). Residues 463–515 (KKRMQKRPPPKSRSRAPPMKRRESKPKPRKTPAAHQGKAKPPPKVKTPVKKAK) show a composition bias toward basic residues. Over residues 516 to 533 (PAAPAIKKPSGGSSSKKP) the composition is skewed to low complexity. Residues 549-559 (SAMRKSLRAKK) show a composition bias toward basic residues.

Its subcellular location is the nucleus. The protein resides in the chromosome. Its function is as follows. Component of heterochromatin that maintains heterochromatin integrity during G1/S progression and regulates the duration of G1 phase to critically influence cell proliferative capacity. In Gallus gallus (Chicken), this protein is Heterochromatin protein 1-binding protein 3 (HP1BP3).